The primary structure comprises 320 residues: o-succinylbenzoate synthase (320 aa).

The active-site Proton donor is the lysine 133. 3 residues coordinate Mg(2+): aspartate 161, glutamate 190, and aspartate 213. Residue lysine 235 is the Proton acceptor of the active site.

The protein belongs to the mandelate racemase/muconate lactonizing enzyme family. MenC type 1 subfamily. It depends on a divalent metal cation as a cofactor.

It carries out the reaction (1R,6R)-6-hydroxy-2-succinyl-cyclohexa-2,4-diene-1-carboxylate = 2-succinylbenzoate + H2O. It participates in quinol/quinone metabolism; 1,4-dihydroxy-2-naphthoate biosynthesis; 1,4-dihydroxy-2-naphthoate from chorismate: step 4/7. Its pathway is quinol/quinone metabolism; menaquinone biosynthesis. Functionally, converts 2-succinyl-6-hydroxy-2,4-cyclohexadiene-1-carboxylate (SHCHC) to 2-succinylbenzoate (OSB). This chain is o-succinylbenzoate synthase, found in Salmonella paratyphi B (strain ATCC BAA-1250 / SPB7).